Consider the following 307-residue polypeptide: MGTVLSLSPSYRKATLFEDGAATVGHYTAVQNSKNAKDKNLKRHSIISVLPWKRIVAVSAKKKNSKKAQPNSSYQSNIAHLNNENLKKSLSCANLSTFAQPPPAQPPAPPASQLSGSQTGVSSSVKKAPHPAITSAGTPKRVIVQASTSELLRCLGEFLCRRCYRLKHLSPTDPVLWLRSVDRSLLLQGWQDQGFITPANVVFLYMLCRDVISSEVGSDHELQAVLLTCLYLSYSYMGNEISYPLKPFLVESCKEAFWDRCLSVINLMSSKMLQINADPHYFTQVFSDLKNESGQEDKKRLLLGLDR.

A lipid anchor (N-myristoyl glycine) is attached at Gly-2. Ser-8 bears the Phosphoserine; by CDK5 mark. Positions Thr-97 to Ile-133 are disordered. The segment covering Gln-100–Pro-110 has biased composition (pro residues). Over residues Ser-112–Val-125 the composition is skewed to polar residues. Position 138 is a phosphothreonine; by CDK5 (Thr-138).

Belongs to the cyclin-dependent kinase 5 activator family. In terms of assembly, heterodimer composed of a catalytic subunit CDK5 and a regulatory subunit CDK5R1 (p25) and macromolecular complex composed of at least CDK5, CDK5R1 (p35) and CDK5RAP1 or CDK5RAP2 or CDK5RAP3. Only the heterodimer shows kinase activity. Interacts with EPHA4 and NGEF; may mediate the activation of NGEF by EPHA4. Interacts with RASGRF2. The complex p35/CDK5 interacts with CLOCK. Post-translationally, the p35 form is proteolytically cleaved by calpain, giving rise to the p25 form. P35 has a 5 to 10 fold shorter half-life compared to p25. The conversion results in deregulation of the CDK5 kinase: p25/CDK5 kinase displays an increased and altered tau phosphorylation in comparison to the p35/CDK5 kinase in vivo. In terms of processing, myristoylated. A proper myristoylation signal is essential for the proper distribution of p35. Phosphorylation at Ser-8 and Thr-138 by CDK5 prevents calpain-mediated proteolysis. Post-translationally, ubiquitinated, leading to its degradation: degradation of p35 by proteasome results in down-regulation of CDK5 activity. During this process, CDK5 phosphorylates p35 and induces its ubiquitination and subsequent degradation. Ubiquitinated by the CRL2(FEM1B) complex, which recognizes the -Gly-Leu-Asp-Arg C-degron at the C-terminus, leading to its degradation. In terms of tissue distribution, brain and neuron specific.

It localises to the cell membrane. The protein resides in the cell projection. The protein localises to the neuron projection. It is found in the nucleus. Its subcellular location is the cytoplasm. It localises to the perinuclear region. The protein resides in the perikaryon. In terms of biological role, p35 is a neuron specific activator of CDK5. The complex p35/CDK5 is required for neurite outgrowth and cortical lamination. Involved in dendritic spine morphogenesis by mediating the EFNA1-EPHA4 signaling. Activator of TPKII. The complex p35/CDK5 participates in the regulation of the circadian clock by modulating the function of CLOCK protein: phosphorylates CLOCK at 'Thr-451' and 'Thr-461' and regulates the transcriptional activity of the CLOCK-BMAL1 heterodimer in association with altered stability and subcellular distribution. This Rattus norvegicus (Rat) protein is Cyclin-dependent kinase 5 activator 1 (Cdk5r1).